A 333-amino-acid chain; its full sequence is Gap junction alpha-4 protein (333 aa).

The Cytoplasmic segment spans residues 1–20; sequence MGDWGFLEKLLDQVQEHSTV. Residues 21-40 form a helical membrane-spanning segment; that stretch reads VGKIWLTVLFIFRILILGLA. Topologically, residues 41–76 are extracellular; the sequence is GESVWGDEQSDFECNTAQPGCTNVCYDQAFPISHIR. Residues 77–99 form a helical membrane-spanning segment; the sequence is YWVLQFLFVSTPTLIYLGHVIYL. Over 100-148 the chain is Cytoplasmic; the sequence is SRREERLRQKEGELRALPSKDPHVERALAAIEHQMAKISVAEDGRLRIR. Residues 149–171 traverse the membrane as a helical segment; that stretch reads GALMGTYVISVLCKSVLEAGFLY. Residues 172–208 are Extracellular-facing; that stretch reads GQWRLYGWTMEPVFVCQRAPCPHVVDCYVSRPTEKTI. The chain crosses the membrane as a helical span at residues 209–231; the sequence is FIIFMLVVGVISLVLNLLELVHL. The Cytoplasmic segment spans residues 232–333; it reads LCRCVSREIK…NSSASKKQYV (102 aa). Positions 292–333 are disordered; sequence ANLTTEERLTSTRPPPFVNAAPQGGQKSSSRPNSSASKKQYV. Residues 318–333 show a composition bias toward low complexity; it reads KSSSRPNSSASKKQYV.

It belongs to the connexin family. Alpha-type (group II) subfamily. As to quaternary structure, a connexon is composed of a hexamer of connexins. In terms of tissue distribution, highly expressed in lung.

It is found in the cell membrane. The protein localises to the cell junction. The protein resides in the gap junction. Its function is as follows. One gap junction consists of a cluster of closely packed pairs of transmembrane channels, the connexons, through which materials of low MW diffuse from one cell to a neighboring cell. In Rattus norvegicus (Rat), this protein is Gap junction alpha-4 protein (Gja4).